The primary structure comprises 828 residues: Glycerol-3-phosphate acyltransferase (828 aa).

The short motif at 309–314 is the HXXXXD motif element; it reads CHRSHI.

This sequence belongs to the GPAT/DAPAT family.

Its subcellular location is the cell inner membrane. It carries out the reaction sn-glycerol 3-phosphate + an acyl-CoA = a 1-acyl-sn-glycero-3-phosphate + CoA. It participates in phospholipid metabolism; CDP-diacylglycerol biosynthesis; CDP-diacylglycerol from sn-glycerol 3-phosphate: step 1/3. This Pseudomonas putida (strain W619) protein is Glycerol-3-phosphate acyltransferase.